The chain runs to 524 residues: GMP synthase [glutamine-hydrolyzing] (524 aa).

A Glutamine amidotransferase type-1 domain is found at 9–207; the sequence is RILILDFSSQ…VIHICQCIPN (199 aa). Catalysis depends on Cys-86, which acts as the Nucleophile. Active-site residues include His-181 and Glu-183. The GMPS ATP-PPase domain occupies 208-399; that stretch reads WTTKHIIEDS…LGLPADLIYR (192 aa). 235-241 contacts ATP; sequence SGGVDSA.

As to quaternary structure, homodimer.

The catalysed reaction is XMP + L-glutamine + ATP + H2O = GMP + L-glutamate + AMP + diphosphate + 2 H(+). It participates in purine metabolism; GMP biosynthesis; GMP from XMP (L-Gln route): step 1/1. Its function is as follows. Catalyzes the synthesis of GMP from XMP. In Coxiella burnetii (strain Dugway 5J108-111), this protein is GMP synthase [glutamine-hydrolyzing].